We begin with the raw amino-acid sequence, 182 residues long: Protein YopQ (182 aa).

Residues 1–24 (MFIKDAYNMRALCTALEQSAPDTI) form the signal peptide.

The protein resides in the secreted. May function as a virulence determinant. This chain is Protein YopQ (yopQ), found in Yersinia enterocolitica.